A 397-amino-acid chain; its full sequence is CCA-adding enzyme (397 aa).

Residues G26 and R29 each coordinate ATP. Positions 26 and 29 each coordinate CTP. Positions 39 and 41 each coordinate Mg(2+). ATP is bound by residues R110, D153, R156, R159, and R162. Residues R110, D153, R156, R159, and R162 each contribute to the CTP site.

The protein belongs to the tRNA nucleotidyltransferase/poly(A) polymerase family. Bacterial CCA-adding enzyme type 3 subfamily. Homodimer. Mg(2+) serves as cofactor.

It catalyses the reaction a tRNA precursor + 2 CTP + ATP = a tRNA with a 3' CCA end + 3 diphosphate. The enzyme catalyses a tRNA with a 3' CCA end + 2 CTP + ATP = a tRNA with a 3' CCACCA end + 3 diphosphate. Functionally, catalyzes the addition and repair of the essential 3'-terminal CCA sequence in tRNAs without using a nucleic acid template. Adds these three nucleotides in the order of C, C, and A to the tRNA nucleotide-73, using CTP and ATP as substrates and producing inorganic pyrophosphate. tRNA 3'-terminal CCA addition is required both for tRNA processing and repair. Also involved in tRNA surveillance by mediating tandem CCA addition to generate a CCACCA at the 3' terminus of unstable tRNAs. While stable tRNAs receive only 3'-terminal CCA, unstable tRNAs are marked with CCACCA and rapidly degraded. The protein is CCA-adding enzyme of Bacillus mycoides (strain KBAB4) (Bacillus weihenstephanensis).